The sequence spans 109 residues: MSQGVEFNRLMLEMRSMQMEAMAKAKPVQAPAEVGAPSFSEMLSQAVDKVNETQQASTAMANAFEVGQSGVDLTDVMIASQKASVSFQAMTQVRNKLVQAYQDIMQMPV.

It belongs to the FliE family.

The protein localises to the bacterial flagellum basal body. The sequence is that of Flagellar hook-basal body complex protein FliE from Pseudomonas aeruginosa (strain LESB58).